The sequence spans 210 residues: DNA-directed RNA polymerases I, II, and III subunit RPABC1 (210 aa).

Met-1 bears the N-acetylmethionine mark. Lys-81 participates in a covalent cross-link: Glycyl lysine isopeptide (Lys-Gly) (interchain with G-Cter in SUMO2).

It belongs to the archaeal Rpo5/eukaryotic RPB5 RNA polymerase subunit family. As to quaternary structure, component of the RNA polymerase I (Pol I), RNA polymerase II (Pol II) and RNA polymerase III (Pol III) complexes consisting of at least 13, 12 and 17 subunits, respectively. Pol I complex consists of a ten-subunit catalytic core composed of POLR1A/RPA1, POLR1B/RPA2, POLR1C/RPAC1, POLR1D/RPAC2, POLR1H/RPA12, POLR2E/RPABC1, POLR2F/RPABC2, POLR2H/RPABC3, POLR2K/RPABC4 and POLR2L/RPABC5; a mobile stalk subunit POLR1F/RPA43 protruding from the core and additional subunits homologous to general transcription factors POLR1E/RPA49 and POLR1G/RPA34. Part of Pol I pre-initiation complex (PIC), in which Pol I core assembles with RRN3 and promoter-bound UTBF and SL1/TIF-IB complex. Pol II complex contains a ten-subunit catalytic core composed of POLR2A/RPB1, POLR2B/RPB2, POLR2C/RPB3, POLR2I/RPB9, POLR2J/RPB11, POLR2E/RPABC1, POLR2F/RPABC2, POLR2H/RPABC3, POLR2K/RPABC4 and POLR2L/RPABC5 and a mobile stalk composed of two subunits POLR2D/RPB4 and POLR2G/RPB7. Part of Pol II(G) complex, in which Pol II core associates with an additional subunit POLR2M; unlike conventional Pol II, Pol II(G) functions as a transcriptional repressor. Part of TBP-based Pol II pre-initiation complex (PIC), in which Pol II core assembles with general transcription factors and other specific initiation factors including GTF2E1, GTF2E2, GTF2F1, GTF2F2, TCEA1, ERCC2, ERCC3, GTF2H2, GTF2H3, GTF2H4, GTF2H5, GTF2A1, GTF2A2, GTF2B and TBP; this large multi-subunit PIC complex mediates DNA unwinding and targets Pol II core to the transcription start site where the first phosphodiester bond forms. In Pol II complex, this subunit is present in 2-fold molar excess over the other subunits. Pol III complex consists of a ten-subunit catalytic core composed of POLR3A/RPC1, POLR3B/RPC2, POLR1C/RPAC1, POLR1D/RPAC2, POLR3K/RPC10, POLR2E/RPABC1, POLR2F/RPABC2, POLR2H/RPABC3, POLR2K/RPABC4 and POLR2L/RPABC5; a mobile stalk composed of two subunits POLR3H/RPC8 and CRCP/RPC9, protruding from the core and functioning primarily in transcription initiation; and additional subunits homologous to general transcription factors of the RNA polymerase II machinery, POLR3C/RPC3-POLR3F/RPC6-POLR3G/RPC7 heterotrimer required for transcription initiation and POLR3D/RPC4-POLR3E/RPC5 heterodimer involved in both transcription initiation and termination. Component of the PAQosome complex which is responsible for the biogenesis of several protein complexes and which consists of R2TP complex members RUVBL1, RUVBL2, RPAP3 and PIH1D1, URI complex members PFDN2, PFDN6, PDRG1, UXT and URI1 as well as ASDURF, POLR2E and DNAAF10/WDR92. Interacts with URI1.

The protein localises to the nucleus. It localises to the nucleolus. DNA-dependent RNA polymerase catalyzes the transcription of DNA into RNA using the four ribonucleoside triphosphates as substrates. Common component of RNA polymerases I, II and III which synthesize ribosomal RNA precursors, mRNA precursors and many functional non-coding RNAs, and small RNAs, such as 5S rRNA and tRNAs, respectively. Pol II is the central component of the basal RNA polymerase II transcription machinery. Pols are composed of mobile elements that move relative to each other. In Pol II, POLR2E/RPABC1 is part of the lower jaw surrounding the central large cleft and thought to grab the incoming DNA template. Seems to be the major component in this process. The polypeptide is DNA-directed RNA polymerases I, II, and III subunit RPABC1 (Mus musculus (Mouse)).